The chain runs to 285 residues: Bifunctional protein FolD (285 aa).

Residues 165–167 and Ile232 contribute to the NADP(+) site; that span reads GAS.

Belongs to the tetrahydrofolate dehydrogenase/cyclohydrolase family. As to quaternary structure, homodimer.

The enzyme catalyses (6R)-5,10-methylene-5,6,7,8-tetrahydrofolate + NADP(+) = (6R)-5,10-methenyltetrahydrofolate + NADPH. It catalyses the reaction (6R)-5,10-methenyltetrahydrofolate + H2O = (6R)-10-formyltetrahydrofolate + H(+). Its pathway is one-carbon metabolism; tetrahydrofolate interconversion. In terms of biological role, catalyzes the oxidation of 5,10-methylenetetrahydrofolate to 5,10-methenyltetrahydrofolate and then the hydrolysis of 5,10-methenyltetrahydrofolate to 10-formyltetrahydrofolate. The chain is Bifunctional protein FolD from Sulfurihydrogenibium sp. (strain YO3AOP1).